Consider the following 233-residue polypeptide: Probable fimbrial chaperone protein ElfD (233 aa).

The first 26 residues, 1-26 (MKTCITKGIVTVSLTAILLSCSSTWA), serve as a signal peptide directing secretion.

It belongs to the periplasmic pilus chaperone family.

It localises to the periplasm. Its function is as follows. Part of the elfADCG fimbrial operon, which could be required for adherence to host epithelial cells. Could be required for the biogenesis of the ElfA fimbriae. In Escherichia coli O157:H7, this protein is Probable fimbrial chaperone protein ElfD (elfD).